The primary structure comprises 210 residues: Superoxide dismutase [Mn], mitochondrial (210 aa).

Mn(2+) contacts are provided by His-29, His-77, Asp-163, and His-167.

The protein belongs to the iron/manganese superoxide dismutase family. In terms of assembly, homotetramer. Mn(2+) is required as a cofactor.

It is found in the mitochondrion matrix. It carries out the reaction 2 superoxide + 2 H(+) = H2O2 + O2. Functionally, destroys superoxide anion radicals which are normally produced within the cells and which are toxic to biological systems. The protein is Superoxide dismutase [Mn], mitochondrial (sodB) of Aspergillus fumigatus (strain ATCC MYA-4609 / CBS 101355 / FGSC A1100 / Af293) (Neosartorya fumigata).